Consider the following 169-residue polypeptide: Interleukin-2 (169 aa).

An N-terminal signal peptide occupies residues 1–20 (MYSMQLASCVTLTLVLLVNS). Thr23 is a glycosylation site (O-linked (GalNAc...) threonine). A disulfide bridge connects residues Cys92 and Cys140.

The protein belongs to the IL-2 family. Produced by immune cells including dendritic cells. In contrast, macrophages do not produce IL2 upon bacterial stimulation.

It is found in the secreted. Functionally, cytokine produced by activated CD4-positive helper T-cells and to a lesser extend activated CD8-positive T-cells and natural killer (NK) cells that plays pivotal roles in the immune response and tolerance. Binds to a receptor complex composed of either the high-affinity trimeric IL-2R (IL2RA/CD25, IL2RB/CD122 and IL2RG/CD132) or the low-affinity dimeric IL-2R (IL2RB and IL2RG). Interaction with the receptor leads to oligomerization and conformation changes in the IL-2R subunits resulting in downstream signaling starting with phosphorylation of JAK1 and JAK3. In turn, JAK1 and JAK3 phosphorylate the receptor to form a docking site leading to the phosphorylation of several substrates including STAT5. This process leads to activation of several pathways including STAT, phosphoinositide-3-kinase/PI3K and mitogen-activated protein kinase/MAPK pathways. Functions as a T-cell growth factor and can increase NK-cell cytolytic activity as well. Promotes strong proliferation of activated B-cells and subsequently immunoglobulin production. Plays a pivotal role in regulating the adaptive immune system by controlling the survival and proliferation of regulatory T-cells, which are required for the maintenance of immune tolerance. Moreover, participates in the differentiation and homeostasis of effector T-cell subsets, including Th1, Th2, Th17 as well as memory CD8-positive T-cells. This Mus musculus (Mouse) protein is Interleukin-2 (Il2).